A 467-amino-acid chain; its full sequence is Argininosuccinate lyase (467 aa).

Belongs to the lyase 1 family. Argininosuccinate lyase subfamily.

Its subcellular location is the cytoplasm. The catalysed reaction is 2-(N(omega)-L-arginino)succinate = fumarate + L-arginine. The protein operates within amino-acid biosynthesis; L-arginine biosynthesis; L-arginine from L-ornithine and carbamoyl phosphate: step 3/3. The chain is Argininosuccinate lyase from Anaeromyxobacter sp. (strain K).